We begin with the raw amino-acid sequence, 366 residues long: Carbamoyl phosphate synthase small chain (366 aa).

A CPSase region spans residues 1-172 (MYGILVLEDG…TYNAENEKTS (172 aa)). The L-glutamine site is built by serine 45, glycine 220, and glycine 222. Residues 172 to 363 (SCVLIDCGVK…VELGIKFKAE (192 aa)) enclose the Glutamine amidotransferase type-1 domain. Cysteine 247 (nucleophile) is an active-site residue. 5 residues coordinate L-glutamine: leucine 248, glutamine 251, asparagine 289, glycine 291, and phenylalanine 292. Active-site residues include histidine 336 and glutamate 338.

This sequence belongs to the CarA family. As to quaternary structure, composed of two chains; the small (or glutamine) chain promotes the hydrolysis of glutamine to ammonia, which is used by the large (or ammonia) chain to synthesize carbamoyl phosphate. Tetramer of heterodimers (alpha,beta)4.

It catalyses the reaction hydrogencarbonate + L-glutamine + 2 ATP + H2O = carbamoyl phosphate + L-glutamate + 2 ADP + phosphate + 2 H(+). The catalysed reaction is L-glutamine + H2O = L-glutamate + NH4(+). Its pathway is amino-acid biosynthesis; L-arginine biosynthesis; carbamoyl phosphate from bicarbonate: step 1/1. The protein operates within pyrimidine metabolism; UMP biosynthesis via de novo pathway; (S)-dihydroorotate from bicarbonate: step 1/3. Functionally, small subunit of the glutamine-dependent carbamoyl phosphate synthetase (CPSase). CPSase catalyzes the formation of carbamoyl phosphate from the ammonia moiety of glutamine, carbonate, and phosphate donated by ATP, constituting the first step of 2 biosynthetic pathways, one leading to arginine and/or urea and the other to pyrimidine nucleotides. The small subunit (glutamine amidotransferase) binds and cleaves glutamine to supply the large subunit with the substrate ammonia. The polypeptide is Carbamoyl phosphate synthase small chain (Methanococcus maripaludis (strain C7 / ATCC BAA-1331)).